A 440-amino-acid chain; its full sequence is Aspartokinase (440 aa).

The protein belongs to the aspartokinase family.

The catalysed reaction is L-aspartate + ATP = 4-phospho-L-aspartate + ADP. It participates in amino-acid biosynthesis; L-lysine biosynthesis via DAP pathway; (S)-tetrahydrodipicolinate from L-aspartate: step 1/4. The protein operates within amino-acid biosynthesis; L-methionine biosynthesis via de novo pathway; L-homoserine from L-aspartate: step 1/3. It functions in the pathway amino-acid biosynthesis; L-threonine biosynthesis; L-threonine from L-aspartate: step 1/5. The sequence is that of Aspartokinase (lysC) from Chlamydia pneumoniae (Chlamydophila pneumoniae).